Here is a 193-residue protein sequence, read N- to C-terminus: Ion-translocating oxidoreductase complex subunit A (193 aa).

Transmembrane regions (helical) follow at residues 5–25 (ILLI…FLGL), 39–59 (IGMG…AYLV), 72–92 (LRTL…EMVI), 102–122 (LLGI…VALL), 134–154 (VIYG…FAAL), and 171–191 (SIAL…SGLV).

Belongs to the NqrDE/RnfAE family. The complex is composed of six subunits: RnfA, RnfB, RnfC, RnfD, RnfE and RnfG.

It localises to the cell inner membrane. Its function is as follows. Part of a membrane-bound complex that couples electron transfer with translocation of ions across the membrane. The protein is Ion-translocating oxidoreductase complex subunit A of Histophilus somni (strain 2336) (Haemophilus somnus).